We begin with the raw amino-acid sequence, 1342 residues long: DNA-directed RNA polymerase subunit beta (1342 aa).

This sequence belongs to the RNA polymerase beta chain family. The RNAP catalytic core consists of 2 alpha, 1 beta, 1 beta' and 1 omega subunit. When a sigma factor is associated with the core the holoenzyme is formed, which can initiate transcription.

It carries out the reaction RNA(n) + a ribonucleoside 5'-triphosphate = RNA(n+1) + diphosphate. Its function is as follows. DNA-dependent RNA polymerase catalyzes the transcription of DNA into RNA using the four ribonucleoside triphosphates as substrates. The polypeptide is DNA-directed RNA polymerase subunit beta (Salmonella typhi).